Here is a 401-residue protein sequence, read N- to C-terminus: Phosphoglycerate kinase (401 aa).

Residues 24–26, Arg40, 63–66, Arg122, and Arg155 contribute to the substrate site; these read DFN and HFGR. ATP is bound by residues Lys206, Gly297, Glu328, and 357-360; that span reads GGDS.

Belongs to the phosphoglycerate kinase family. Monomer.

The protein resides in the cytoplasm. It carries out the reaction (2R)-3-phosphoglycerate + ATP = (2R)-3-phospho-glyceroyl phosphate + ADP. It functions in the pathway carbohydrate degradation; glycolysis; pyruvate from D-glyceraldehyde 3-phosphate: step 2/5. The sequence is that of Phosphoglycerate kinase from Gloeothece citriformis (strain PCC 7424) (Cyanothece sp. (strain PCC 7424)).